The following is a 251-amino-acid chain: Chloride intracellular channel protein 5 (251 aa).

The interval 1–98 (MTDSATTNGD…EEFLEETLTP (98 aa)) is required for insertion into the membrane. The short motif at 32-35 (CPFS) is the G-site element. The chain crosses the membrane as a helical span at residues 34–54 (FSQRLFMILWLKGVVFNVTTV). One can recognise a GST C-terminal domain in the interval 101–241 (YPKLAAKHRE…AADSEIELAY (141 aa)).

It belongs to the chloride channel CLIC family. In terms of assembly, component of a multimeric complex consisting of several cytoskeletal proteins, including actin, ezrin, alpha-actinin, gelsolin, and IQGAP1. Interacts with AKAP9. Interacts with TPRN. TPRN, CLIC5 and PTPQR form concentric rings at the base of stereocilia and may form a complex. Interacts with EZR, MYO6 and RDX; the proteins may work together as a complex to stabilize linkages between the plasma membrane and subjacent actin cytoskeleton at the stereocilium base. Detected in lung and inner ear. Detected in embryonic cochlea, on microvilli-covered apical surfaces of interdental cells, columnar cells of Kolliker's organ, and on stereocilia of inner and outer hair cells (at protein level). Also detected in the eye, where it localizes to lens fiber cells in the lens epithelium (at protein level).

It localises to the golgi apparatus. The protein localises to the cytoplasm. It is found in the cytoskeleton. Its subcellular location is the microtubule organizing center. The protein resides in the centrosome. It localises to the cell cortex. The protein localises to the membrane. It is found in the apical cell membrane. Its subcellular location is the mitochondrion. The protein resides in the cell projection. It localises to the stereocilium. The catalysed reaction is Na(+)(in) = Na(+)(out). The enzyme catalyses K(+)(in) = K(+)(out). It carries out the reaction chloride(in) = chloride(out). Its activity is regulated as follows. Inhibited by F-actin. In terms of biological role, in the soluble state, catalyzes glutaredoxin-like thiol disulfide exchange reactions with reduced glutathione as electron donor. Can insert into membranes and form non-selective ion channels almost equally permeable to Na(+), K(+) and Cl(-). Required for normal hearing. Necessary for the formation of stereocilia in the inner ear and normal development of the organ of Corti. Required for the proper localization of PTPRQ and RDX to the stereocilium base during postnatal maturation of hair bundles. Can insert into membranes and form poorly selective ion channels that may also transport chloride ions. Required for the development and/or maintenance of the proper glomerular endothelial cell and podocyte architecture. Plays a role in formation of the lens suture in the eye, which is important for normal optical properties of the lens. The protein is Chloride intracellular channel protein 5 (Clic5) of Mus musculus (Mouse).